Here is a 540-residue protein sequence, read N- to C-terminus: Probable G-protein coupled receptor 75 (540 aa).

The span at 1–15 (MNSTGHLQDAPNATS) shows a compositional bias: polar residues. The tract at residues 1–27 (MNSTGHLQDAPNATSLHVPHSQEGNST) is disordered. Residues 1 to 46 (MNSTGHLQDAPNATSLHVPHSQEGNSTSLQEGLQDLIHTATLVTCT) lie on the Extracellular side of the membrane. N-linked (GlcNAc...) asparagine glycosylation is found at Asn2, Asn12, and Asn25. The chain crosses the membrane as a helical span at residues 47–67 (FLLAVIFCLGSYGNFIVFLSF). Topologically, residues 68 to 86 (FDPAFRKFRTNFDFMILNL) are cytoplasmic. A helical transmembrane segment spans residues 87-107 (SFCDLFICGVTAPMFTFVLFF). At 108-120 (SSASSIPDAFCFT) the chain is on the extracellular side. Residues 121–141 (FHLTSSGFIIMSLKTVAVIAL) form a helical membrane-spanning segment. Residues 142 to 160 (HRLRMVLGKQPNRTASFPC) lie on the Cytoplasmic side of the membrane. A helical transmembrane segment spans residues 161 to 181 (TVLLTLLLWATSFTLATLATL). Residues 182-205 (KTSKSHLCLPMSSLIAGKGKAILS) are Extracellular-facing. The helical transmembrane segment at 206–226 (LYVVDFTFCVAVVSVSYIMIA) threads the bilayer. The Cytoplasmic segment spans residues 227 to 318 (QTLRKNAQVR…INLSTAKDSK (92 aa)). Residues 319 to 339 (AVVTCVIIVLSVLVCCLPLGI) traverse the membrane as a helical segment. Topologically, residues 340–350 (SLVQVVLSSNG) are extracellular. A helical membrane pass occupies residues 351-371 (SFILYQFELFGFTLIFFKSGL). The Cytoplasmic segment spans residues 372–540 (NPFIYSRNSA…SAKQIPVPSV (169 aa)).

This sequence belongs to the G-protein coupled receptor 1 family. In terms of tissue distribution, expressed at high levels in brain and spinal cord and at detectable levels in retinal pigment epithelium. In situ hybridization of adult eye sections localized transcripts only to the perivascular cells, surrounding retinal arterioles, in the ganglion cell/nerve fiber layer. Also expressed by islet cells (at protein level).

The protein resides in the cell membrane. G protein-coupled receptor that is activated by the chemokine CCL5/RANTES. Probably coupled to heterotrimeric Gq proteins, it stimulates inositol trisphosphate production and calcium mobilization upon activation. Together with CCL5/RANTES, may play a role in neuron survival through activation of a downstream signaling pathway involving the PI3, Akt and MAP kinases. CCL5/RANTES may also regulate insulin secretion by pancreatic islet cells through activation of this receptor. In Homo sapiens (Human), this protein is Probable G-protein coupled receptor 75 (GPR75).